The chain runs to 325 residues: L-lactate dehydrogenase (325 aa).

NAD(+) is bound by residues Val21, Asp42, Lys47, Tyr73, and 87 to 88; that span reads GA. Residues Gln90, Arg96, and 128 to 131 each bind substrate; that span reads NPVD. Residues 126–128 and Ser151 contribute to the NAD(+) site; that span reads ATN. 156–159 provides a ligand contact to substrate; the sequence is DTAR. 2 residues coordinate beta-D-fructose 1,6-bisphosphate: Arg161 and His176. Catalysis depends on His183, which acts as the Proton acceptor. Tyr228 bears the Phosphotyrosine mark. Position 237 (Thr237) interacts with substrate.

The protein belongs to the LDH/MDH superfamily. LDH family. Homotetramer.

The protein resides in the cytoplasm. The enzyme catalyses (S)-lactate + NAD(+) = pyruvate + NADH + H(+). It functions in the pathway fermentation; pyruvate fermentation to lactate; (S)-lactate from pyruvate: step 1/1. Its activity is regulated as follows. Allosterically activated by fructose 1,6-bisphosphate (FBP). Functionally, catalyzes the conversion of lactate to pyruvate. This chain is L-lactate dehydrogenase, found in Shouchella clausii (strain KSM-K16) (Alkalihalobacillus clausii).